A 220-amino-acid chain; its full sequence is MSMGLEITGTALAVLGWLGTIVCCALPMWRVSAFIGSNIITSQNIWEGLWMNCVVQSTGQMQCKVYDSLLALPQDLQAARALIVVAILLAAFGLLVALVGAQCTNCVQDDTAKAKITIVAGVLFLLAALLTLVPVSWSANTIIRDFYNPVVPEAQKREMGAGLYVGWAAAALQLLGGALLCCSCPPREKKYTATKVVYSAPRSTGPGASLGTGYDRKDYV.

Residues 1–8 (MSMGLEIT) lie on the Cytoplasmic side of the membrane. A helical membrane pass occupies residues 9 to 29 (GTALAVLGWLGTIVCCALPMW). Residues 30–80 (RVSAFIGSNIITSQNIWEGLWMNCVVQSTGQMQCKVYDSLLALPQDLQAAR) are Extracellular-facing. The helical transmembrane segment at 81-101 (ALIVVAILLAAFGLLVALVGA) threads the bilayer. The Cytoplasmic portion of the chain corresponds to 102–115 (QCTNCVQDDTAKAK). Residues 116 to 136 (ITIVAGVLFLLAALLTLVPVS) form a helical membrane-spanning segment. At 137–159 (WSANTIIRDFYNPVVPEAQKREM) the chain is on the extracellular side. The helical transmembrane segment at 160–180 (GAGLYVGWAAAALQLLGGALL) threads the bilayer. Topologically, residues 181 to 220 (CCSCPPREKKYTATKVVYSAPRSTGPGASLGTGYDRKDYV) are cytoplasmic. At Y198 the chain carries Phosphotyrosine. Residues S199 and S209 each carry the phosphoserine modification. The interactions with TJP1, TJP2 and TJP3 stretch occupies residues 219-220 (YV).

Belongs to the claudin family. Can form homo- and heteropolymers with other CLDN. Homopolymers interact with CLDN1 and CLDN2 homopolymers. Interacts in cis (within the same plasma membrane) with CLDN19. Directly interacts with TJP1/ZO-1, TJP2/ZO-2 and TJP3/ZO-3.

The protein resides in the cell junction. It is found in the tight junction. Its subcellular location is the cell membrane. Its function is as follows. Barrier-forming claudin. Plays a major role in tight junction-specific obliteration of the intercellular space, through calcium-independent cell-adhesion activity. The sequence is that of Claudin-3 (CLDN3) from Homo sapiens (Human).